Reading from the N-terminus, the 433-residue chain is Urokinase-type plasminogen activator (433 aa).

The first 20 residues, 1–20 (MRVLLACLLVCALVVSDSDG), serve as a signal peptide directing secretion. The EGF-like domain occupies 29–65 (GESNCGCLNGGKCVTYKYFSNIQRCSCPKKFQGEHCE). Intrachain disulfides connect Cys-33/Cys-41, Cys-35/Cys-53, Cys-55/Cys-64, Cys-72/Cys-153, Cys-93/Cys-135, and Cys-124/Cys-148. The tract at residues 36-59 (LNGGKCVTYKYFSNIQRCSCPKKF) is binds urokinase plasminogen activator surface receptor. The Kringle domain occupies 72–153 (CYQGNGHSYR…FVQFCMVQDC (82 aa)). The connecting peptide stretch occupies residues 154-180 (SVGKSPSSPREKEEFQCGQKALRPRFK). A Phosphoserine modification is found at Ser-160. Disulfide bonds link Cys-170–Cys-301, Cys-211–Cys-227, Cys-219–Cys-290, Cys-315–Cys-384, Cys-347–Cys-363, and Cys-374–Cys-402. A Peptidase S1 domain is found at 181-426 (IVGGQVTNAE…FLPWINTHTR (246 aa)). Active-site charge relay system residues include His-226 and Asp-277. Ser-378 serves as the catalytic Charge relay system.

Belongs to the peptidase S1 family. Found in high and low molecular mass forms. Each consists of two chains, A and B. The high molecular mass form contains a long chain A which is cleaved to yield a short chain A. Forms heterodimer with SERPINA5. Binds LRP1B; binding is followed by internalization and degradation. Interacts with MRC2. Interacts with PLAUR. In complex with SERPINE1, interacts with PLAUR/uPAR. Interacts with SORL1 and LRP1, either alone or in complex with SERPINE1; these interactions are abolished in the presence of LRPAP1/RAP. The ternary complex composed of PLAUR-PLAU-PAI1 also interacts with SORLA. Produced as an inactive single-chain protein (pro-uPA or sc-uPA), is processed into the active disulfide-linked two-chain form of PLAU/uPA by a proteolytic event mediated, at least, by TMPRSS4.

Its subcellular location is the secreted. The catalysed reaction is Specific cleavage of Arg-|-Val bond in plasminogen to form plasmin.. Inhibited by SERPINA5. Inhibited by SERPINE1. Functionally, specifically cleaves the zymogen plasminogen to form the active enzyme plasmin. This chain is Urokinase-type plasminogen activator (PLAU), found in Bos taurus (Bovine).